An 819-amino-acid chain; its full sequence is Protein SCARECROW (819 aa).

Disordered regions lie at residues 6–49 (LFNG…HSER), 65–136 (HNNN…INNN), 212–231 (SQNN…RNNT), and 393–420 (PLST…TTTT). Residues 15–33 (TTPDETNNNSTSNSSNIST) show a composition bias toward low complexity. Residues 79-98 (RTNNTSSLNCSLPATTQKGV) are compositionally biased toward polar residues. Residues 99–136 (TTTTTTTLASSGNNNNNNNNNNNYHYHNNNNNSIINNN) show a composition bias toward low complexity. A coiled-coil region spans residues 418-448 (TTTSAELALARKKKEEIKEQKKKDEEGLHLL). The GRAS domain occupies 438 to 806 (KKKDEEGLHL…LCLLTASAWR (369 aa)). Positions 445-507 (LHLLTLLLQC…RLVSSCLGIY (63 aa)) are leucine repeat I (LRI). The LxCxE motif motif lies at 452 to 456 (LQCAE). The tract at residues 526–591 (FQVFNGISPF…GGPPYVRLTG (66 aa)) is VHIID. A VHIID motif is present at residues 557 to 561 (VHIID). Residues 601 to 633 (ATGKRLSDFANKLGLPFEFFPVAEKVGNIDVEK) are leucine repeat II (LRII). The interval 642-729 (VAVHWLQHSL…QQLLSREIRN (88 aa)) is PFYRE. The segment at 732 to 806 (AVGGPSRSGE…LCLLTASAWR (75 aa)) is SAW.

This sequence belongs to the GRAS family. As to expression, expressed in shoot apical meristem, leaf primordia, between the cortex and the differentiating vessels in lower shoots and in root endodermis.

The protein resides in the nucleus. In terms of biological role, putative transcription factor involved in asymmetric cell division. This is Protein SCARECROW (SCR) from Pisum sativum (Garden pea).